Consider the following 78-residue polypeptide: Protein SlyX homolog (78 aa).

The protein belongs to the SlyX family.

This chain is Protein SlyX homolog, found in Xanthomonas campestris pv. campestris (strain 8004).